Consider the following 313-residue polypeptide: Probable WRKY transcription factor 41 (313 aa).

Residues Gly135–Gly203 constitute a DNA-binding region (WRKY).

This sequence belongs to the WRKY group III family.

It localises to the nucleus. In terms of biological role, transcription factor. Interacts specifically with the W box (5'-(T)TGAC[CT]-3'), a frequently occurring elicitor-responsive cis-acting element. The protein is Probable WRKY transcription factor 41 (WRKY41) of Arabidopsis thaliana (Mouse-ear cress).